A 314-amino-acid polypeptide reads, in one-letter code: Ribonuclease Z (314 aa).

Zn(2+) is bound by residues His-62, His-64, Asp-66, His-67, His-144, Asp-215, and His-273. The active-site Proton acceptor is the Asp-66.

It belongs to the RNase Z family. Homodimer. Zn(2+) is required as a cofactor.

It carries out the reaction Endonucleolytic cleavage of RNA, removing extra 3' nucleotides from tRNA precursor, generating 3' termini of tRNAs. A 3'-hydroxy group is left at the tRNA terminus and a 5'-phosphoryl group is left at the trailer molecule.. Functionally, zinc phosphodiesterase, which displays some tRNA 3'-processing endonuclease activity. Probably involved in tRNA maturation, by removing a 3'-trailer from precursor tRNA. The sequence is that of Ribonuclease Z from Prochlorococcus marinus (strain NATL2A).